The primary structure comprises 65 residues: Small ribosomal subunit protein bS21B (65 aa).

The protein belongs to the bacterial ribosomal protein bS21 family.

The chain is Small ribosomal subunit protein bS21B from Geobacter sulfurreducens (strain ATCC 51573 / DSM 12127 / PCA).